Reading from the N-terminus, the 240-residue chain is BLOC-1-related complex subunit 8 homolog (240 aa).

Disordered regions lie at residues 1–33 and 163–240; these read MSSILKSSTGSNHSSTSNHSSINNISQLSGSHG and KTFS…EKIN. 2 stretches are compositionally biased toward low complexity: residues 7-26 and 163-179; these read SSTGSNHSSTSNHSSINNIS and KTFSSFQQQHKIYQQQQ. Residues 180 to 190 show a composition bias toward polar residues; sequence TNLTPSKPTLS. Residues 196 to 205 show a composition bias toward low complexity; it reads DNNNNNNNLN. Over residues 208–240 the composition is skewed to basic and acidic residues; that stretch reads EKIEKEEKIEKEDEGKEKDEKEKDDKDLNEKIN. Residues 211–239 adopt a coiled-coil conformation; it reads EKEEKIEKEDEGKEKDEKEKDDKDLNEKI.

The protein belongs to the BORCS8 family.

The protein localises to the lysosome membrane. May participate in the coupling of lysosomes to microtubule plus-end-directed kinesin motor. This Dictyostelium discoideum (Social amoeba) protein is BLOC-1-related complex subunit 8 homolog.